The following is a 199-amino-acid chain: 7-methyl-GTP pyrophosphatase (199 aa).

Residue Asp73 is the Proton acceptor of the active site.

Belongs to the Maf family. YceF subfamily. A divalent metal cation serves as cofactor.

It localises to the cytoplasm. The enzyme catalyses N(7)-methyl-GTP + H2O = N(7)-methyl-GMP + diphosphate + H(+). Its function is as follows. Nucleoside triphosphate pyrophosphatase that hydrolyzes 7-methyl-GTP (m(7)GTP). May have a dual role in cell division arrest and in preventing the incorporation of modified nucleotides into cellular nucleic acids. The sequence is that of 7-methyl-GTP pyrophosphatase from Bordetella bronchiseptica (strain ATCC BAA-588 / NCTC 13252 / RB50) (Alcaligenes bronchisepticus).